The primary structure comprises 671 residues: Solute carrier family 53 member 1 (671 aa).

The interval 1–193 (MKFAEHLTAH…DIDRLIQETE (193 aa)) is important for promoting lysosomal/autophagosomal degradation of PXo bodies following inorganic phosphate (Pi) starvation. The Cytoplasmic segment spans residues 1 to 228 (MKFAEHLTAH…EQQSPWTTFK (228 aa)). The 217-residue stretch at 2 to 218 (KFAEHLTAHI…MKRLRVPPLG (217 aa)) folds into the SPX domain. Positions 152–159 (KILKKHDK) are important for inositol polyphosphate binding. The helical transmembrane segment at 229 to 253 (VGLFSGAFVVLFITVVIAAMFYGFG) threads the bilayer. Over 254–255 (EN) the chain is Extracellular. Residues 256 to 287 (WRAGMRMFRAPFLIIECLFLWGVNVYGWRSSG) traverse the membrane as a helical segment. The Cytoplasmic segment spans residues 288–300 (VNHVLIFELDPRN). The chain crosses the membrane as a helical span at residues 301 to 328 (HLSEQNIMEVASVFGVIWACCVLSYIFC). Over 329-334 (DPLGIP) the chain is Extracellular. The helical transmembrane segment at 335-356 (QYAAPLCLYTLMAAFLLNPTKT) threads the bilayer. The segment at residues 357–374 (FHHEARFWAIRILIRVIM) is an intramembrane region (helical). The Cytoplasmic portion of the chain corresponds to 375–379 (APFCF). The chain crosses the membrane as a discontinuously helical span at residues 380–413 (VNFADFWLADQLNSMVPAFLDIPFLICFFGRSPT). Residues Asp-389 and Asn-392 each coordinate phosphate. The Extracellular segment spans residues 414-415 (WH). The chain crosses the membrane as a discontinuously helical span at residues 416 to 455 (KAGKAASHCVEYVSLLHPIVAIMPAYFRFAQCIRRYRDTK). An EXS domain is found at 423-627 (HCVEYVSLLH…DCSDQTTILR (205 aa)). Position 456 (Glu-456) is a topological domain, cytoplasmic. The helical transmembrane segment at 457-488 (SFPHLVNAAKYATSFFVVIFAHKYHTTTDTYP) threads the bilayer. Phosphate contacts are provided by Lys-466 and Tyr-467. The Extracellular segment spans residues 489-491 (LSK). Residues 492-519 (ENPWFYCWITAAIFSSCYAYTWDIKMDW) form a helical membrane-spanning segment. At 520-538 (GLFDSKAGDNRFLREEIVY) the chain is on the cytoplasmic side. Residues 539-570 (SSTWFYYFGIIEDLILRFSWTLSMSLIEAGYI) form a discontinuously helical membrane-spanning segment. Phosphate is bound by residues Arg-555, Arg-586, and Arg-587. The chain crosses the membrane as a helical span at residues 571 to 609 (EGDVMMTILSPLEVFRRFIWNYFRLENEHLNNVGKFRAV). Residues 610–671 (RDISVAPMDC…QGESIEDLCS (62 aa)) lie on the Cytoplasmic side of the membrane.

It belongs to the SYG1 (TC 2.A.94) family. In terms of assembly, homodimer. Interacts with the FAR/SIN/STRIPAK complex members Cka and Pp2A-29B. In terms of tissue distribution, detected in PXo bodies found in the enterocytes and progenitors of the midgut and in the hindgut, but rarely occur in the Malpighian tubules, crop, brain, muscles and germlines (at protein level).

It localises to the membrane. The enzyme catalyses phosphate(in) = phosphate(out). Its function is as follows. Inorganic ion transporter that mediates phosphate ion export across the cell membrane. Plays a major role in phosphate homeostasis, preventing intracellular phosphate accumulation and possible calcium phosphate precipitation, ultimately preserving calcium signaling. Binds inositol hexakisphosphate (Ins6P) and similar inositol polyphosphates, such as 5-diphospho-inositol pentakisphosphate (5-InsP7), which are important intracellular signaling molecules involved in regulation of phosphate flux. In enterocytes and differentiating progenitors of the gut, promotes the biogenesis and maintenance of organelles called PXo bodies that store intracellular inorganic phosphate (Pi), and also regulates Cka-JNK mediated tissue homeostasis in response to Pi availability in these tissues. Under conditions of adequate Pi, transports Pi into PXo bodies which convert and store the Pi in the form of phospholipids. It also inhibits Cka at the post-transcriptional level to prevent Cka-bsk/JNK mediated cell proliferation. Upon Pi starvation, Pxo expression is down-regulated resulting in the PXo bodies decreasing in phospholipid content until they undergo lysosomal/autophagosomal degradation and release the stored Pi back into the cytosol for use by the cell. Decrease in Pxo expression also activates the Cka protein, which moves to the nucleus to activate bsk/JNK which then induces nearby progenitor cells to proliferate and form new absorptive cells, probably helping the organism to cope with the nutrient deficiency by maximizing absorption of dietary Pi. This Drosophila melanogaster (Fruit fly) protein is Solute carrier family 53 member 1.